A 326-amino-acid chain; its full sequence is Apolipoprotein F (326 aa).

Residues 1–35 form the signal peptide; that stretch reads MTGLCGYSAPDMRGLRLIMIPVELLLCYLLLHPVD. A propeptide spanning residues 36–164 is cleaved from the precursor; that stretch reads ATSYGKQTNV…EQQSTGRVGR (129 aa). N-linked (GlcNAc...) asparagine glycosylation is present at Asn118. An O-linked (GalNAc...) threonine glycan is attached at Thr274. Ser323 is subject to Phosphoserine.

It belongs to the apolipoprotein F family. In terms of processing, O-glycosylated with core 1 or possibly core 8 glycans. Expressed by the liver and secreted in plasma.

Its subcellular location is the secreted. Functionally, minor apolipoprotein that associates with LDL. Inhibits cholesteryl ester transfer protein (CETP) activity and appears to be an important regulator of cholesterol transport. Also associates to a lesser degree with VLDL, Apo-AI and Apo-AII. This is Apolipoprotein F (APOF) from Homo sapiens (Human).